Consider the following 293-residue polypeptide: F-box only protein 6 (293 aa).

In terms of domain architecture, F-box spans 10–57; sequence LDSINELPENILLELFTHVPARQLLLNCRLVCSLWRDLIDLMTLWKRK. An FBA domain is found at 78-259; sequence FYFLRSLHRN…VTNSSIVVSP (182 aa). A Phosphoserine modification is found at serine 258. The span at 261 to 271 shows a compositional bias: polar residues; sequence MTRNQASSEAQ. A disordered region spans residues 261 to 285; it reads MTRNQASSEAQPGQKHGQEEAAQSP. Position 284 is a phosphoserine (serine 284).

As to quaternary structure, interacts with VCP. Part of a SCF (SKP1-cullin-F-box) protein ligase complex. Interacts with CHEK1 and CUL1.

Its subcellular location is the cytoplasm. It functions in the pathway protein modification; protein ubiquitination. In terms of biological role, substrate-recognition component of some SCF (SKP1-CUL1-F-box protein)-type E3 ubiquitin ligase complexes. Involved in endoplasmic reticulum-associated degradation pathway (ERAD) for misfolded lumenal proteins by recognizing and binding sugar chains on unfolded glycoproteins that are retrotranslocated into the cytosol and promoting their ubiquitination and subsequent degradation. Able to recognize and bind denatured glycoproteins, which are modified with not only high-mannose but also complex-type oligosaccharides. Also recognizes sulfated glycans. Also involved in DNA damage response by specifically recognizing activated CHEK1 (phosphorylated on 'Ser-345'), promoting its ubiquitination and degradation. Ubiquitination of CHEK1 is required to ensure that activated CHEK1 does not accumulate as cells progress through S phase, or when replication forks encounter transient impediments during normal DNA replication. The polypeptide is F-box only protein 6 (FBXO6) (Homo sapiens (Human)).